Reading from the N-terminus, the 321-residue chain is Histidine N-alpha-methyltransferase (321 aa).

Residue Y56 coordinates L-histidine. S-adenosyl-L-methionine contacts are provided by residues G86, K92, D113, and 141–142; that span reads DF. L-histidine contacts are provided by residues N166, Y206, and 282 to 284; that span reads EVS.

Belongs to the methyltransferase superfamily. EgtD family. In terms of assembly, monomer.

The catalysed reaction is L-histidine + 3 S-adenosyl-L-methionine = hercynine + 3 S-adenosyl-L-homocysteine + 3 H(+). It functions in the pathway amino-acid biosynthesis; ergothioneine biosynthesis. Catalyzes the SAM-dependent triple methylation of the alpha-amino group of histidine to form hercynine, a step in the biosynthesis pathway of ergothioneine (ERG). ERG is one of the major redox buffers which protects bacteria against redox stressors and antibiotics; loss of ERG or mycothiol (MSH, the other major redox buffer in this bacteria) leads to respiratory alterations and bioenergetic deficiencies that negatively impact virulence. This is Histidine N-alpha-methyltransferase (egtD) from Mycobacterium tuberculosis (strain CDC 1551 / Oshkosh).